The following is a 483-amino-acid chain: Glutamyl-tRNA(Gln) amidotransferase subunit A (483 aa).

Residues Lys-77 and Ser-152 each act as charge relay system in the active site. Ser-176 acts as the Acyl-ester intermediate in catalysis.

This sequence belongs to the amidase family. GatA subfamily. In terms of assembly, heterotrimer of A, B and C subunits.

The catalysed reaction is L-glutamyl-tRNA(Gln) + L-glutamine + ATP + H2O = L-glutaminyl-tRNA(Gln) + L-glutamate + ADP + phosphate + H(+). Its function is as follows. Allows the formation of correctly charged Gln-tRNA(Gln) through the transamidation of misacylated Glu-tRNA(Gln) in organisms which lack glutaminyl-tRNA synthetase. The reaction takes place in the presence of glutamine and ATP through an activated gamma-phospho-Glu-tRNA(Gln). In Listeria welshimeri serovar 6b (strain ATCC 35897 / DSM 20650 / CCUG 15529 / CIP 8149 / NCTC 11857 / SLCC 5334 / V8), this protein is Glutamyl-tRNA(Gln) amidotransferase subunit A.